Reading from the N-terminus, the 946-residue chain is MSISMKDVDPAFRGVGQKDGLEVWRIENFKPVPVPTSSHGKFYMGDSYIILKTTALKNGSFRHDLHYWLGKDTSQDEAGTAAILTVELDAALGGRAVQYREVQGGETEKLLSYFRPCIMPQPGGVASGFNHVEVNQQDHVTRLYVCQGKHVVHVKEVPFVRSSLNHEDIFILDTANKIFQFNGSNSCIQERAKALEVVQYIKDTFHEGKCEVAAVEDGKLMADTEAGEFWGLFGGFAPLPKKTSSEDNGDDKETVTKLLCFNQGTLEHISFESLEHELLETNKCYLLDCGAEMYVWMGRGTSLQVRKGASEAAEKLLIDENRKGSNVIKVIEGFETIMFKSKFNKWPPTPDLKLSSEDGRGKVAALLRSQGLDVKGLMKAAPEEEEPQPYIDCTGHLQVWRVNGDGKTLLSSSDQSKLYTGDCYIFQYTYTGDDKEECLIGTWFGKKSVEEDRTSAISLASKMFQAAKFQAAQARLYEGKEPIQFFVIFQSLQVFKGGLSSGYKNFIAVNGTDDDTYVEGGLALFRIQGSGSENMQAIQVDAVSSSLNSSYCYILHNGNTVFTWTGNLTTSLDNDLVERQLDVIKPDLPSRSQKEGRETDQFWELLGGKCKYSNKKIGKENESDPHLFSCILSKENLKVKEIHHFTQDDLMAEDIFVLDCRTDLFVWVGQEVDAKLRSQAMDIGEKFLLHDFLMENLSQDTPIFIVTEGSEPQFFTRFFTWDSAKSLMHGSSYQRKLAIVKGGATPSLDKPKRRTPAFSGRNAGQDKSQQRTRSMSHSPERHRIRGRSPAFTAIASAFENPSTRYLSTPPPAVKKLFPRSGGSELPKTSSKQSAINALTSAFEGPTKSTIPKSVKVSPEAEKAIQEEGSTIGESENEPEDDENSTIYPYERLTTTSDDPAPDIDVTKREVYLSSVEFAEKFGMTRASFKNLPKWKQNRLKSDLQLF.

Gelsolin-like repeat units follow at residues 28-109, 152-219, 274-339, and 641-715; these read NFKP…ETEK, VHVK…EDGK, LEHE…TIMF, and EIHH…PQFF. 2 disordered regions span residues 744 to 783 and 846 to 902; these read ATPS…ERHR and TKST…PAPD. Over residues 765-777 the composition is skewed to polar residues; sequence QDKSQQRTRSMSH. Positions 874-883 are enriched in acidic residues; sequence SENEPEDDEN. The HP domain maps to 881–946; it reads DENSTIYPYE…NRLKSDLQLF (66 aa).

It belongs to the villin/gelsolin family.

It is found in the cytoplasm. It localises to the cytoskeleton. Its function is as follows. Ca(2+)-regulated actin-binding protein. Binds actin microfilaments (MFs). Involved in actin filament bundling, severing and capping. Caps the barbed end of actin filaments and is able to sever them in a calcium-dependent manner. This Oryza sativa subsp. indica (Rice) protein is Villin-4.